The sequence spans 66 residues: Cytochrome c oxidase polypeptide VIII, mitochondrial (66 aa).

A mitochondrion-targeting transit peptide spans 1 to 17 (MLRYSLQARSALRGVRF). The Mitochondrial matrix segment spans residues 18-38 (SSSHSAPKPGSTIPFYINKKP). The helical transmembrane segment at 39-59 (LPTLLYFGTFGVIFSIPFIVV) threads the bilayer. Over 60–66 (KYHNRNL) the chain is Mitochondrial intermembrane.

It belongs to the cytochrome c oxidase VIIc family. Component of the cytochrome c oxidase (complex IV, CIV), a multisubunit enzyme composed of a catalytic core of 3 subunits and several supernumerary subunits. The complex exists as a monomer or a dimer and forms supercomplexes (SCs) in the inner mitochondrial membrane with ubiquinol-cytochrome c oxidoreductase (cytochrome b-c1 complex, complex III, CIII).

The protein localises to the mitochondrion inner membrane. It participates in energy metabolism; oxidative phosphorylation. Its function is as follows. Component of the cytochrome c oxidase, the last enzyme in the mitochondrial electron transport chain which drives oxidative phosphorylation. The respiratory chain contains 3 multisubunit complexes succinate dehydrogenase (complex II, CII), ubiquinol-cytochrome c oxidoreductase (cytochrome b-c1 complex, complex III, CIII) and cytochrome c oxidase (complex IV, CIV), that cooperate to transfer electrons derived from NADH and succinate to molecular oxygen, creating an electrochemical gradient over the inner membrane that drives transmembrane transport and the ATP synthase. Cytochrome c oxidase is the component of the respiratory chain that catalyzes the reduction of oxygen to water. Electrons originating from reduced cytochrome c in the intermembrane space (IMS) are transferred via the dinuclear copper A center (CU(A)) of subunit 2 and heme A of subunit 1 to the active site in subunit 1, a binuclear center (BNC) formed by heme A3 and copper B (CU(B)). The BNC reduces molecular oxygen to 2 water molecules using 4 electrons from cytochrome c in the IMS and 4 protons from the mitochondrial matrix. This chain is Cytochrome c oxidase polypeptide VIII, mitochondrial (cox8), found in Schizosaccharomyces pombe (strain 972 / ATCC 24843) (Fission yeast).